The chain runs to 161 residues: Small heat shock protein ibp (161 aa).

A sHSP domain is found at 35–150; it reads EKPLSDTPAY…KPKKIFINIP (116 aa).

This sequence belongs to the small heat shock protein (HSP20) family.

This chain is Small heat shock protein ibp (ibp), found in Buchnera aphidicola subsp. Schizaphis graminum (strain Sg).